A 432-amino-acid chain; its full sequence is Adenylosuccinate synthetase (432 aa).

GTP-binding positions include G13–K19 and G41–T43. D14 serves as the catalytic Proton acceptor. Positions 14 and 41 each coordinate Mg(2+). IMP contacts are provided by residues D14–K17, N39–H42, T130, R144, Q225, T240, and R304. H42 functions as the Proton donor in the catalytic mechanism. Substrate is bound at residue A300–R306. GTP contacts are provided by residues R306, K332–D334, and S415–G417.

The protein belongs to the adenylosuccinate synthetase family. In terms of assembly, homodimer. Mg(2+) is required as a cofactor.

The protein localises to the cytoplasm. The catalysed reaction is IMP + L-aspartate + GTP = N(6)-(1,2-dicarboxyethyl)-AMP + GDP + phosphate + 2 H(+). Its pathway is purine metabolism; AMP biosynthesis via de novo pathway; AMP from IMP: step 1/2. Its function is as follows. Plays an important role in the de novo pathway of purine nucleotide biosynthesis. Catalyzes the first committed step in the biosynthesis of AMP from IMP. The sequence is that of Adenylosuccinate synthetase from Alteromonas mediterranea (strain DSM 17117 / CIP 110805 / LMG 28347 / Deep ecotype).